Reading from the N-terminus, the 125-residue chain is Large ribosomal subunit protein uL22c (125 aa).

It belongs to the universal ribosomal protein uL22 family. Part of the 50S ribosomal subunit.

The protein localises to the plastid. Its subcellular location is the chloroplast. Its function is as follows. This protein binds specifically to 23S rRNA. The globular domain of the protein is located near the polypeptide exit tunnel on the outside of the subunit, while an extended beta-hairpin is found that lines the wall of the exit tunnel in the center of the 70S ribosome. The protein is Large ribosomal subunit protein uL22c (rpl22) of Nuphar advena (Common spatterdock).